A 721-amino-acid chain; its full sequence is Polyribonucleotide nucleotidyltransferase (721 aa).

Residues aspartate 490 and aspartate 496 each coordinate Mg(2+). The 67-residue stretch at 557–623 folds into the KH domain; it reads PRIISIKINP…RIAGLTKEAK (67 aa). The 69-residue stretch at 625 to 693 folds into the S1 motif domain; the sequence is GEEYEGTVVK…DRGKIDLIRP (69 aa). The disordered stretch occupies residues 693–721; that stretch reads PELEGKIAPREPRAPRGGGDRGPRPPRRD.

It belongs to the polyribonucleotide nucleotidyltransferase family. Mg(2+) is required as a cofactor.

Its subcellular location is the cytoplasm. It catalyses the reaction RNA(n+1) + phosphate = RNA(n) + a ribonucleoside 5'-diphosphate. Functionally, involved in mRNA degradation. Catalyzes the phosphorolysis of single-stranded polyribonucleotides processively in the 3'- to 5'-direction. In Deinococcus deserti (strain DSM 17065 / CIP 109153 / LMG 22923 / VCD115), this protein is Polyribonucleotide nucleotidyltransferase.